The chain runs to 302 residues: Probable histone acetyltransferase Rv0428c (302 aa).

The enzyme catalyses L-lysyl-[histone] + acetyl-CoA = N(6)-acetyl-L-lysyl-[histone] + CoA + H(+). Its function is as follows. Shows histone acetyl transferase (HAT) activity with recombinant eukaryotic H3 histone expressed in bacteria as substrate and acetyl-CoA as donor. May be involved in survival under stress conditions. The chain is Probable histone acetyltransferase Rv0428c from Mycobacterium tuberculosis (strain ATCC 25618 / H37Rv).